The following is a 22-amino-acid chain: 2.4 kDa venom peptide (22 aa).

In terms of processing, contains 2 disulfide bonds. Expressed by the venom gland.

It is found in the secreted. Its function is as follows. Not lethal to mice by intraperitoneal or intracerebroventricular injections in doses up to 150 micrograms. The sequence is that of 2.4 kDa venom peptide from Heterometrus spinifer (Asia giant forest scorpion).